A 393-amino-acid chain; its full sequence is Fructose-bisphosphate aldolase 4, cytosolic (393 aa).

Arg73 contacts substrate. Cys207 bears the S-glutathionyl cysteine; transient; alternate mark. An S-nitrosocysteine; transient; alternate modification is found at Cys207. Glu217 functions as the Proton acceptor in the catalytic mechanism. Lys259 serves as the catalytic Schiff-base intermediate with dihydroxyacetone-P. Substrate contacts are provided by residues 301-303 (SGG) and Arg333.

It belongs to the class I fructose-bisphosphate aldolase family. As to quaternary structure, homotetramer. In terms of processing, S-glutathionylated at Cys-207. S-nitrosylated at Cys-207. As to expression, highly expressed in flowers.

It localises to the cytoplasm. The protein localises to the cytosol. It catalyses the reaction beta-D-fructose 1,6-bisphosphate = D-glyceraldehyde 3-phosphate + dihydroxyacetone phosphate. The protein operates within carbohydrate degradation; glycolysis; D-glyceraldehyde 3-phosphate and glycerone phosphate from D-glucose: step 4/4. Fructose-bisphosphate aldolase that plays a key role in glycolysis and gluconeogenesis. This chain is Fructose-bisphosphate aldolase 4, cytosolic, found in Arabidopsis thaliana (Mouse-ear cress).